A 281-amino-acid polypeptide reads, in one-letter code: MRCIRAAPADDGPYTPIIMSPVFPCCFCQGEAVFPSNRASCKHVFCFFCTPRECPECGSGGGRKLIPNEYLYALTAKPFPPAPMGRTAGFWLMGPNGGWHVEPRVVVLEDLLTAVIITVGALVETRGAPEGAVRVRARGKWEGAIALPLPLLDDLVELGGAIEAAGGKVAVGGFLVRTLYELVVRYHDTLAKTFPVMAPRFGSLGALKELLSRFRIPGYFGSGTPRYDGLLGHIACEIRKCCDPPGIGFPNPFRAFLNRKNRHKRTGGATGSPFTDPPTGH.

This is Putative zinc-binding protein ORF11 (ORF11) from Ictaluridae (bullhead catfishes).